A 180-amino-acid chain; its full sequence is UPF0227 protein YcfP (180 aa).

It belongs to the UPF0227 family.

The chain is UPF0227 protein YcfP from Escherichia coli O9:H4 (strain HS).